The sequence spans 248 residues: Aspartate/glutamate leucyltransferase (248 aa).

The protein belongs to the R-transferase family. Bpt subfamily.

The protein resides in the cytoplasm. The catalysed reaction is N-terminal L-glutamyl-[protein] + L-leucyl-tRNA(Leu) = N-terminal L-leucyl-L-glutamyl-[protein] + tRNA(Leu) + H(+). It carries out the reaction N-terminal L-aspartyl-[protein] + L-leucyl-tRNA(Leu) = N-terminal L-leucyl-L-aspartyl-[protein] + tRNA(Leu) + H(+). In terms of biological role, functions in the N-end rule pathway of protein degradation where it conjugates Leu from its aminoacyl-tRNA to the N-termini of proteins containing an N-terminal aspartate or glutamate. This chain is Aspartate/glutamate leucyltransferase, found in Methylobacterium sp. (strain 4-46).